A 25-amino-acid chain; its full sequence is Fructokinase-1 (25 aa).

The protein belongs to the ROK (NagC/XylR) family. As to quaternary structure, homodimer. Mg(2+) serves as cofactor.

The enzyme catalyses D-fructose + ATP = D-fructose 6-phosphate + ADP + H(+). With respect to regulation, inhibition by zinc ions (Potential). Inactivated by EDTA. The protein is Fructokinase-1 of Lactococcus lactis subsp. lactis (Streptococcus lactis).